The following is a 618-amino-acid chain: Alpha-dioxygenase PIOX (618 aa).

The active-site Proton acceptor is the H157. D158 is a Ca(2+) binding site. H162 lines the heme b pocket. Ca(2+) is bound by residues T210, W212, D214, and S216. H311 is a hexadecanoate binding site. 3 residues coordinate heme b: H382, R479, and R483. Hexadecanoate is bound at residue E599.

The protein belongs to the peroxidase family. Requires heme b as cofactor. Ca(2+) is required as a cofactor.

It carries out the reaction a 1,2-saturated fatty acid + O2 = a (2R)-2-hydroperoxy fatty acid. It catalyses the reaction (9Z,12Z)-octadecadienoate + O2 = (2R,9Z,12Z)-2-hydroperoxyoctadecadienoate. The catalysed reaction is hexadecanoate + O2 = (2R)-2-hydroperoxyhexadecanoate. The enzyme catalyses (9Z,12Z,15Z)-octadecatrienoate + O2 = (R)-2-hydroperoxy-(9Z,12Z,15Z)-octadecatrienoate. It carries out the reaction tetradecanoate + O2 = (2R)-2-hydroperoxytetradecanoate. It catalyses the reaction octadecanoate + O2 = (2R)-2-hydroperoxyoctadecanoate. The catalysed reaction is (9Z)-octadecenoate + O2 = (2R,9Z)-2-hydroperoxyoctadecenoate. Functionally, alpha-dioxygenase that catalyzes the primary oxygenation step of a variety of 14-20 carbon fatty acids, containing up to three unsaturated bonds, into their corresponding 2R-hydroperoxides. Involved in the production of oxylipins that function in cell signaling, wound healing, and protection from infection. This Oryza sativa subsp. japonica (Rice) protein is Alpha-dioxygenase PIOX.